Here is a 511-residue protein sequence, read N- to C-terminus: Lysine--tRNA ligase (511 aa).

2 residues coordinate Mg(2+): glutamate 421 and glutamate 428.

It belongs to the class-II aminoacyl-tRNA synthetase family. In terms of assembly, homodimer. Mg(2+) is required as a cofactor.

It localises to the cytoplasm. It carries out the reaction tRNA(Lys) + L-lysine + ATP = L-lysyl-tRNA(Lys) + AMP + diphosphate. The sequence is that of Lysine--tRNA ligase from Aeromonas hydrophila subsp. hydrophila (strain ATCC 7966 / DSM 30187 / BCRC 13018 / CCUG 14551 / JCM 1027 / KCTC 2358 / NCIMB 9240 / NCTC 8049).